The primary structure comprises 396 residues: Probable peptidoglycan glycosyltransferase FtsW (396 aa).

9 helical membrane passes run 17–37 (FCDGWLLVATLSLMLIGWVMV), 61–81 (VFVLCSMVVALLVLRIPMAWW), 83–103 (ANGPLLLLVGLALLALVLVAG), 117–137 (GIPLNLQASEIAKLCLIVYLA), 159–179 (MVMAVMGVLLIFEPDYGAVVV), 198–218 (FLLLMGLVAALGAALAIAEPY), 274–294 (FVFAVLAEELGMIGAVAVIGL), 316–336 (FAAYLCYGIALVIGAQAFINI), and 350–370 (LPLLSYGGSSLVISAVMVGML).

The protein belongs to the SEDS family. FtsW subfamily.

It localises to the cell inner membrane. The catalysed reaction is [GlcNAc-(1-&gt;4)-Mur2Ac(oyl-L-Ala-gamma-D-Glu-L-Lys-D-Ala-D-Ala)](n)-di-trans,octa-cis-undecaprenyl diphosphate + beta-D-GlcNAc-(1-&gt;4)-Mur2Ac(oyl-L-Ala-gamma-D-Glu-L-Lys-D-Ala-D-Ala)-di-trans,octa-cis-undecaprenyl diphosphate = [GlcNAc-(1-&gt;4)-Mur2Ac(oyl-L-Ala-gamma-D-Glu-L-Lys-D-Ala-D-Ala)](n+1)-di-trans,octa-cis-undecaprenyl diphosphate + di-trans,octa-cis-undecaprenyl diphosphate + H(+). It functions in the pathway cell wall biogenesis; peptidoglycan biosynthesis. In terms of biological role, peptidoglycan polymerase that is essential for cell division. This is Probable peptidoglycan glycosyltransferase FtsW from Halomonas elongata (strain ATCC 33173 / DSM 2581 / NBRC 15536 / NCIMB 2198 / 1H9).